The sequence spans 154 residues: 6,7-dimethyl-8-ribityllumazine synthase (154 aa).

5-amino-6-(D-ribitylamino)uracil is bound by residues phenylalanine 15, 47–49 (TFD), and 71–73 (AVI). Residue 76–77 (ET) coordinates (2S)-2-hydroxy-3-oxobutyl phosphate. Histidine 79 functions as the Proton donor in the catalytic mechanism. Leucine 104 is a 5-amino-6-(D-ribitylamino)uracil binding site. Residue arginine 119 coordinates (2S)-2-hydroxy-3-oxobutyl phosphate.

Belongs to the DMRL synthase family.

It carries out the reaction (2S)-2-hydroxy-3-oxobutyl phosphate + 5-amino-6-(D-ribitylamino)uracil = 6,7-dimethyl-8-(1-D-ribityl)lumazine + phosphate + 2 H2O + H(+). It participates in cofactor biosynthesis; riboflavin biosynthesis; riboflavin from 2-hydroxy-3-oxobutyl phosphate and 5-amino-6-(D-ribitylamino)uracil: step 1/2. Catalyzes the formation of 6,7-dimethyl-8-ribityllumazine by condensation of 5-amino-6-(D-ribitylamino)uracil with 3,4-dihydroxy-2-butanone 4-phosphate. This is the penultimate step in the biosynthesis of riboflavin. The sequence is that of 6,7-dimethyl-8-ribityllumazine synthase from Saccharolobus solfataricus (strain ATCC 35092 / DSM 1617 / JCM 11322 / P2) (Sulfolobus solfataricus).